The primary structure comprises 180 residues: Aspartate 1-decarboxylase (180 aa).

S24 functions as the Schiff-base intermediate with substrate; via pyruvic acid in the catalytic mechanism. S24 carries the pyruvic acid (Ser) modification. Residue T56 coordinates substrate. The active-site Proton donor is the Y57. Position 72–74 (72–74 (GAA)) interacts with substrate.

The protein belongs to the PanD family. As to quaternary structure, heterooctamer of four alpha and four beta subunits. Requires pyruvate as cofactor. Post-translationally, is synthesized initially as an inactive proenzyme, which is activated by self-cleavage at a specific serine bond to produce a beta-subunit with a hydroxyl group at its C-terminus and an alpha-subunit with a pyruvoyl group at its N-terminus.

The protein localises to the cytoplasm. The catalysed reaction is L-aspartate + H(+) = beta-alanine + CO2. Its pathway is cofactor biosynthesis; (R)-pantothenate biosynthesis; beta-alanine from L-aspartate: step 1/1. Its function is as follows. Catalyzes the pyruvoyl-dependent decarboxylation of aspartate to produce beta-alanine. In Paramagnetospirillum magneticum (strain ATCC 700264 / AMB-1) (Magnetospirillum magneticum), this protein is Aspartate 1-decarboxylase.